We begin with the raw amino-acid sequence, 169 residues long: Crossover junction endodeoxyribonuclease RuvC (169 aa).

Catalysis depends on residues Asp-15, Glu-75, and Asp-147. 3 residues coordinate Mg(2+): Asp-15, Glu-75, and Asp-147.

Belongs to the RuvC family. As to quaternary structure, homodimer which binds Holliday junction (HJ) DNA. The HJ becomes 2-fold symmetrical on binding to RuvC with unstacked arms; it has a different conformation from HJ DNA in complex with RuvA. In the full resolvosome a probable DNA-RuvA(4)-RuvB(12)-RuvC(2) complex forms which resolves the HJ. Requires Mg(2+) as cofactor.

It is found in the cytoplasm. It catalyses the reaction Endonucleolytic cleavage at a junction such as a reciprocal single-stranded crossover between two homologous DNA duplexes (Holliday junction).. Functionally, the RuvA-RuvB-RuvC complex processes Holliday junction (HJ) DNA during genetic recombination and DNA repair. Endonuclease that resolves HJ intermediates. Cleaves cruciform DNA by making single-stranded nicks across the HJ at symmetrical positions within the homologous arms, yielding a 5'-phosphate and a 3'-hydroxyl group; requires a central core of homology in the junction. The consensus cleavage sequence is 5'-(A/T)TT(C/G)-3'. Cleavage occurs on the 3'-side of the TT dinucleotide at the point of strand exchange. HJ branch migration catalyzed by RuvA-RuvB allows RuvC to scan DNA until it finds its consensus sequence, where it cleaves and resolves the cruciform DNA. The chain is Crossover junction endodeoxyribonuclease RuvC from Caulobacter sp. (strain K31).